The following is a 506-amino-acid chain: Maturase K (506 aa).

It belongs to the intron maturase 2 family. MatK subfamily.

The protein localises to the plastid. It localises to the chloroplast. Usually encoded in the trnK tRNA gene intron. Probably assists in splicing its own and other chloroplast group II introns. The polypeptide is Maturase K (Trifolium incarnatum (Crimson clover)).